Consider the following 333-residue polypeptide: O-acetyl transferase (333 aa).

The protein belongs to the acyltransferase 3 family.

The protein localises to the host cell inner membrane. Antigenically converts S.flexneri serotype X to 3a, Y to 3b, 1a to 1b and 4a to 4b by O-acetylating the O-antigenic polysaccharide chain. The polypeptide is O-acetyl transferase (OAC) (Shigella flexneri (Shigella flexneri bacteriophage VI)).